Here is a 110-residue protein sequence, read N- to C-terminus: Hydrogenase maturation factor HypA (110 aa).

H2 serves as a coordination point for Ni(2+). Zn(2+) contacts are provided by C70, C73, C86, and C89.

It belongs to the HypA/HybF family.

Involved in the maturation of [NiFe] hydrogenases. Required for nickel insertion into the metal center of the hydrogenase. The sequence is that of Hydrogenase maturation factor HypA from Geobacter sp. (strain M21).